Consider the following 324-residue polypeptide: Beta-ketoacyl-[acyl-carrier-protein] synthase III (324 aa).

Active-site residues include Cys112 and His249. The interval 250–254 (QANDR) is ACP-binding. Residue Asn279 is part of the active site.

This sequence belongs to the thiolase-like superfamily. FabH family. In terms of assembly, homodimer.

It localises to the cytoplasm. It catalyses the reaction malonyl-[ACP] + acetyl-CoA + H(+) = 3-oxobutanoyl-[ACP] + CO2 + CoA. It participates in lipid metabolism; fatty acid biosynthesis. Functionally, catalyzes the condensation reaction of fatty acid synthesis by the addition to an acyl acceptor of two carbons from malonyl-ACP. Catalyzes the first condensation reaction which initiates fatty acid synthesis and may therefore play a role in governing the total rate of fatty acid production. Possesses both acetoacetyl-ACP synthase and acetyl transacylase activities. Its substrate specificity determines the biosynthesis of branched-chain and/or straight-chain of fatty acids. This chain is Beta-ketoacyl-[acyl-carrier-protein] synthase III, found in Streptococcus pneumoniae serotype 2 (strain D39 / NCTC 7466).